Here is a 98-residue protein sequence, read N- to C-terminus: Small ribosomal subunit protein eS24 (98 aa).

The protein belongs to the eukaryotic ribosomal protein eS24 family.

The chain is Small ribosomal subunit protein eS24 from Thermococcus gammatolerans (strain DSM 15229 / JCM 11827 / EJ3).